We begin with the raw amino-acid sequence, 101 residues long: Small ribosomal subunit protein uS14 (101 aa).

It belongs to the universal ribosomal protein uS14 family. Part of the 30S ribosomal subunit. Contacts proteins S3 and S10.

Functionally, binds 16S rRNA, required for the assembly of 30S particles and may also be responsible for determining the conformation of the 16S rRNA at the A site. This Albidiferax ferrireducens (strain ATCC BAA-621 / DSM 15236 / T118) (Rhodoferax ferrireducens) protein is Small ribosomal subunit protein uS14.